The sequence spans 571 residues: Ubiquitin-like-specific protease 1C (571 aa).

The disordered stretch occupies residues 221–260 (SESKDPKGDRRPNEAYGKGKPNESSPYLLVDDDDGDDDKV). Basic and acidic residues predominate over residues 222–233 (ESKDPKGDRRPN). Residues His426, Asp449, and Cys512 contribute to the active site.

The protein belongs to the peptidase C48 family.

The protein localises to the nucleus. The protein resides in the nucleoplasm. Its function is as follows. Protease that catalyzes two essential functions in the SUMO pathway: processing of full-length SUMOs to their mature forms and deconjugation of SUMO from targeted proteins. Cleaves precursors of SUM1 and SUM2, but not of SUM3 or SUM5. Able to release SUM1 and SUM2 from conjugates, but unable to cleave SUM3. Protease activity mainly directed at deconjugating SUM1 and SUM2 from their target proteins. Regulates salt stress responses and flowering time. Redundant with ULP1D. This chain is Ubiquitin-like-specific protease 1C (ULP1C), found in Arabidopsis thaliana (Mouse-ear cress).